Consider the following 616-residue polypeptide: Glutamine--fructose-6-phosphate aminotransferase [isomerizing] (616 aa).

Residue Cys-2 is the Nucleophile; for GATase activity of the active site. Residues 2–222 enclose the Glutamine amidotransferase type-2 domain; it reads CGIIGYSGPR…QERIVALSGD (221 aa). The tract at residues 70-89 is disordered; that stretch reads TGIGHTRWATHGEPSDRNAH. 2 consecutive SIS domains span residues 289–428 and 461–606; these read IRDD…LRGF and LAHW…VDRP. Catalysis depends on Lys-611, which acts as the For Fru-6P isomerization activity.

In terms of assembly, homodimer.

Its subcellular location is the cytoplasm. It catalyses the reaction D-fructose 6-phosphate + L-glutamine = D-glucosamine 6-phosphate + L-glutamate. In terms of biological role, catalyzes the first step in hexosamine metabolism, converting fructose-6P into glucosamine-6P using glutamine as a nitrogen source. In Tropheryma whipplei (strain TW08/27) (Whipple's bacillus), this protein is Glutamine--fructose-6-phosphate aminotransferase [isomerizing].